The chain runs to 146 residues: Cyanate hydratase (146 aa).

Active-site residues include Arg87, Glu90, and Ser113.

Belongs to the cyanase family.

It catalyses the reaction cyanate + hydrogencarbonate + 3 H(+) = NH4(+) + 2 CO2. Catalyzes the reaction of cyanate with bicarbonate to produce ammonia and carbon dioxide. This is Cyanate hydratase from Nostoc sp. (strain PCC 7120 / SAG 25.82 / UTEX 2576).